The chain runs to 114 residues: Putative antiporter subunit mnhC2 (114 aa).

The next 3 helical transmembrane spans lie at 3-23 (LILL…ILSI), 28-48 (IVIG…SMGT), and 72-92 (AIVL…LVLV).

This sequence belongs to the CPA3 antiporters (TC 2.A.63) subunit C family. In terms of assembly, may form a heterooligomeric complex that consists of seven subunits: mnhA2, mnhB2, mnhC2, mnhD2, mnhE2, mnhF2 and mnhG2.

The protein localises to the cell membrane. The protein is Putative antiporter subunit mnhC2 (mnhC2) of Staphylococcus aureus (strain Mu3 / ATCC 700698).